A 292-amino-acid chain; its full sequence is Malectin (292 aa).

The first 28 residues, 1-28 (MLGAWAVEGTAVALLRLLLLLLPPAIRG), serve as a signal peptide directing secretion. Over 29-269 (PGLGVAGVAG…TPNPYASDNS (241 aa)) the chain is Lumenal. Residues Y82, Y104, Y131, F132, and D201 each contribute to the a carbohydrate site. Residues 221 to 265 (LQPHPGLEKKEEEEEEEEYDEGSNLKKQTNKNRVQSGPRTPNPYA) form a disordered region. Residues 231–241 (EEEEEEEEYDE) show a composition bias toward acidic residues. Over residues 245–265 (LKKQTNKNRVQSGPRTPNPYA) the composition is skewed to polar residues. The N-linked (GlcNAc...) asparagine glycan is linked to N268. Residues 270–290 (SLMFPILVAFGVFIPTLFCLC) form a helical membrane-spanning segment. Topologically, residues 291–292 (RL) are cytoplasmic.

It belongs to the malectin family. As to quaternary structure, interacts with the oligosaccharyltransferase (OST) complex.

The protein resides in the endoplasmic reticulum membrane. Carbohydrate-binding protein with a strong ligand preference for Glc2-N-glycan. May play a role in the early steps of protein N-glycosylation. This chain is Malectin, found in Homo sapiens (Human).